Consider the following 304-residue polypeptide: tRNA pseudouridine synthase B (304 aa).

Catalysis depends on Asp47, which acts as the Nucleophile. Positions 85–105 (TNTDDGEGEVTETSDARPSDD) are disordered.

Belongs to the pseudouridine synthase TruB family. Type 1 subfamily.

It catalyses the reaction uridine(55) in tRNA = pseudouridine(55) in tRNA. Functionally, responsible for synthesis of pseudouridine from uracil-55 in the psi GC loop of transfer RNAs. The sequence is that of tRNA pseudouridine synthase B from Dinoroseobacter shibae (strain DSM 16493 / NCIMB 14021 / DFL 12).